The chain runs to 134 residues: Probable glycine cleavage system H protein (134 aa).

One can recognise a Lipoyl-binding domain in the interval Thr29 to Lys110. Residue Lys70 is modified to N6-lipoyllysine.

Belongs to the GcvH family. In terms of assembly, the glycine cleavage system is composed of four proteins: P, T, L and H. It depends on (R)-lipoate as a cofactor.

Its function is as follows. The glycine cleavage system catalyzes the degradation of glycine. The H protein shuttles the methylamine group of glycine from the P protein to the T protein. This Pyrococcus abyssi (strain GE5 / Orsay) protein is Probable glycine cleavage system H protein.